Here is a 152-residue protein sequence, read N- to C-terminus: MFRGATLVNLDSKGRLAVPTRYRDGLIEDAAGQLVCTIDIHHPCLLLYPLPEWEIIEQKLSRLSSMNPVERRVQRLLLGHASECQMDNAGRLLIAPVLRQHAGLTKEVMLVGQFNKFELWDETTWYQRVKEDIDAEQSATGELSERLQDLSL.

2 consecutive SpoVT-AbrB domains span residues 5-52 (ATLV…PLPE) and 81-124 (ASEC…DETT).

The protein belongs to the MraZ family. As to quaternary structure, forms oligomers.

The protein resides in the cytoplasm. It localises to the nucleoid. Its function is as follows. Negatively regulates its own expression and that of the subsequent genes in the proximal part of the division and cell wall (dcw) gene cluster. Acts by binding directly to DNA. May also regulate the expression of genes outside the dcw cluster. The polypeptide is Transcriptional regulator MraZ (Klebsiella pneumoniae (strain 342)).